Here is a 269-residue protein sequence, read N- to C-terminus: 5'-nucleotidase SurE (269 aa).

D11, D12, S42, and N90 together coordinate a divalent metal cation.

The protein belongs to the SurE nucleotidase family. A divalent metal cation serves as cofactor.

The protein localises to the cytoplasm. The enzyme catalyses a ribonucleoside 5'-phosphate + H2O = a ribonucleoside + phosphate. Its function is as follows. Nucleotidase that shows phosphatase activity on nucleoside 5'-monophosphates. The chain is 5'-nucleotidase SurE from Haloarcula marismortui (strain ATCC 43049 / DSM 3752 / JCM 8966 / VKM B-1809) (Halobacterium marismortui).